We begin with the raw amino-acid sequence, 452 residues long: Elongation factor Tu, mitochondrial (452 aa).

Residues 1–43 (MAAATLLRATPRFSGLCASPTPFLQGRLRPLKAPASPFLCRGL) constitute a mitochondrion transit peptide. Positions 55–251 (KPHVNVGTIG…AVDTYIPVPT (197 aa)) constitute a tr-type G domain. A G1 region spans residues 64-71 (GHVDHGKT). GTP-binding residues include aspartate 67, glycine 69, lysine 70, threonine 71, and threonine 72. Threonine 71 contributes to the Mg(2+) binding site. Lysine 79 is modified (N6-acetyllysine). Lysine 88 bears the N6-acetyllysine; alternate mark. Position 88 is an N6-succinyllysine; alternate (lysine 88). Residues 105–109 (GITIN) form a G2 region. Residues 126–129 (DCPG) are G3. The GTP site is built by asparagine 181, aspartate 184, serine 219, alanine 220, and leucine 221. The tract at residues 181–184 (NKAD) is G4. Positions 219–221 (SAL) are G5. Lysine 234 is subject to N6-succinyllysine. Position 256 is an N6-acetyllysine (lysine 256). Threonine 278 carries the phosphothreonine modification. At lysine 286 the chain carries N6-succinyllysine. Serine 312 carries the phosphoserine modification. 2 positions are modified to N6-acetyllysine: lysine 361 and lysine 418.

The protein belongs to the TRAFAC class translation factor GTPase superfamily. Classic translation factor GTPase family. EF-Tu/EF-1A subfamily. In terms of assembly, interacts with NLRX1. Interacts with ATG16L1.

It localises to the mitochondrion. The catalysed reaction is GTP + H2O = GDP + phosphate + H(+). Functionally, GTP hydrolase that promotes the GTP-dependent binding of aminoacyl-tRNA to the A-site of ribosomes during protein biosynthesis. Plays a role in the regulation of autophagy and innate immunity. Recruits ATG5-ATG12 and NLRX1 at mitochondria and serves as a checkpoint of the RIGI-MAVS pathway. In turn, inhibits RLR-mediated type I interferon while promoting autophagy. The chain is Elongation factor Tu, mitochondrial from Rattus norvegicus (Rat).